The chain runs to 340 residues: Probable rRNA-processing protein EBP2 homolog (340 aa).

Positions 1–10 are enriched in basic residues; that stretch reads MVRKMNKLAK. 2 disordered regions span residues 1–59 and 245–340; these read MVRK…DDDE and HGLD…RGRR. Composition is skewed to acidic residues over residues 23–37 and 46–59; these read PESD…FDNA and MDIE…DDDE. Positions 206–245 form a coiled coil; that stretch reads QKEVLAAKNTEKKNLAEAVKKHKKGMKQQLEDMLNNVKRH. 2 stretches are compositionally biased toward gly residues: residues 264-277 and 318-333; these read GRGG…GRGG and PRGG…GRGG.

The protein belongs to the EBP2 family.

Its subcellular location is the nucleus. The protein resides in the nucleolus. Its function is as follows. Required for the processing of the 27S pre-rRNA. The sequence is that of Probable rRNA-processing protein EBP2 homolog from Caenorhabditis elegans.